Consider the following 251-residue polypeptide: 14-3-3-like protein (251 aa).

The protein belongs to the 14-3-3 family.

This chain is 14-3-3-like protein, found in Fucus vesiculosus (Bladder wrack).